The following is a 112-amino-acid chain: uncharacterized protein (112 aa).

To Buchnera BUsg564.

This is an uncharacterized protein from Buchnera aphidicola subsp. Acyrthosiphon pisum (strain APS) (Acyrthosiphon pisum symbiotic bacterium).